Here is a 109-residue protein sequence, read N- to C-terminus: Cell division protein ZapA (109 aa).

A coiled-coil region spans residues 21–99 (PDQRDALNQA…IEQALLEQGR (79 aa)).

This sequence belongs to the ZapA family. Type 1 subfamily. As to quaternary structure, homodimer. Interacts with FtsZ.

Its subcellular location is the cytoplasm. Its function is as follows. Activator of cell division through the inhibition of FtsZ GTPase activity, therefore promoting FtsZ assembly into bundles of protofilaments necessary for the formation of the division Z ring. It is recruited early at mid-cell but it is not essential for cell division. The polypeptide is Cell division protein ZapA (Shigella boydii serotype 18 (strain CDC 3083-94 / BS512)).